Consider the following 1487-residue polypeptide: Secretory phospholipase A2 receptor (1487 aa).

Residues 1–26 form the signal peptide; sequence MVQWLAMLQLLWLQQLLLLGIHQGIA. Residues 27–1396 are Extracellular-facing; that stretch reads QDLTHIQEPS…AQPEKGLSHS (1370 aa). The Ricin B-type lectin domain maps to 42–165; sequence KGIFIIQSES…SSGGDICEHP (124 aa). 4 cysteine pairs are disulfide-bonded: cysteine 55-cysteine 68, cysteine 93-cysteine 110, cysteine 181-cysteine 207, and cysteine 195-cysteine 222. Asparagine 97 carries N-linked (GlcNAc...) asparagine glycosylation. The Fibronectin type-II domain maps to 176-224; that stretch reads AHGMPCVFPFQFKGHWHHDCIREGQKEHLLWCATTSRYEEDEKWGFCPD. N-linked (GlcNAc...) asparagine glycosylation is present at asparagine 239. 6 consecutive C-type lectin domains span residues 241–357, 387–504, 524–643, 673–797, 819–938, and 964–1095; these read SSRI…YICK, FNRK…YICK, HGRF…MSLC, GLAS…WICR, YQNA…SICK, and FNYK…GFVC. Disulfide bonds link cysteine 263/cysteine 356, cysteine 333/cysteine 348, cysteine 408/cysteine 503, cysteine 480/cysteine 495, cysteine 617/cysteine 634, cysteine 699/cysteine 796, cysteine 774/cysteine 788, cysteine 840/cysteine 937, cysteine 914/cysteine 929, and cysteine 1066/cysteine 1086. Residue asparagine 928 is glycosylated (N-linked (GlcNAc...) asparagine). N-linked (GlcNAc...) asparagine glycans are attached at residues asparagine 1107, asparagine 1122, and asparagine 1131. C-type lectin domains follow at residues 1120 to 1231 and 1256 to 1377; these read YGNR…GAIC and FKGN…FICK. 3 disulfide bridges follow: cysteine 1208/cysteine 1222, cysteine 1279/cysteine 1376, and cysteine 1353/cysteine 1368. A helical membrane pass occupies residues 1397-1417; it reads IVPVTVTLTLIIALGIFMLCF. Residues 1418-1487 are Cytoplasmic-facing; it reads WIYKQKSDIF…HKGRPICISP (70 aa). An Endocytosis signal motif is present at residues 1435–1441; it reads GSYYPTL. Residues 1463–1475 are compositionally biased toward basic and acidic residues; it reads DEEVRDAPATESK. Positions 1463–1487 are disordered; sequence DEEVRDAPATESKRGHKGRPICISP.

In terms of assembly, interacts with sPLA2-IB/PLA2G1B; this interaction mediates intracellular signaling as well as clearance of extracellular sPLA2-IB/PLA2G1B via endocytotic pathway. Interacts with sPLA2-X/PLA2G10; this interaction mediates sPLA2-X/PLA2G10 clearance and inactivation. In terms of processing, the secretory phospholipase A2 receptor form may be produced by the action of metalloproteinases. It contains all extracellular domains and only lacks transmembrane and cytosolic regions. It is however unclear whether this form is produced by proteolytic cleavage as suggested by some experiments reported by PubMed:11830583, or by alternative splicing. In terms of tissue distribution, widely expressed. Present in type II alveolar epithelial cells and a subset of splenic lymphocytes. Present at the surface of polymorphonuclear neutrophils (at protein level).

It localises to the cell membrane. It is found in the secreted. Receptor for secretory phospholipase A2 (sPLA2). Acts as a receptor for phospholipases sPLA2-IB/PLA2G1B, sPLA2-X/PLA2G10 and, with lower affinity, sPLA2-IIA/PLA2G2A. Also able to bind to snake PA2-like toxins. Although its precise function remains unclear, binding of sPLA2 to its receptor participates in both positive and negative regulation of sPLA2 functions as well as clearance of sPLA2. Binding of sPLA2-IB/PLA2G1B induces various effects depending on the cell type, such as activation of the mitogen-activated protein kinase (MAPK) cascade to induce cell proliferation, the production of lipid mediators, selective release of arachidonic acid in bone marrow-derived mast cells. In neutrophils, binding of sPLA2-IB/PLA2G1B can activate p38 MAPK to stimulate elastase release and cell adhesion. May be involved in responses in pro-inflammatory cytokine productions during endotoxic shock. Also has endocytic properties and rapidly internalizes sPLA2 ligands, which is particularly important for the clearance of extracellular sPLA2s to protect their potent enzymatic activities. The soluble secretory phospholipase A2 receptor form is circulating and acts as a negative regulator of sPLA2 functions by blocking the biological functions of sPLA2-IB/PLA2G1B and sPLA2-X/PLA2G10. In podocytes, binding of sPLA2-IB/PLA2G1B can regulate podocyte survival and glomerular homeostasis. This is Secretory phospholipase A2 receptor (Pla2r1) from Mus musculus (Mouse).